A 776-amino-acid chain; its full sequence is 3-isopropylmalate dehydratase (776 aa).

3 residues coordinate [4Fe-4S] cluster: cysteine 357, cysteine 418, and cysteine 421. Basic and acidic residues predominate over residues 482–493; sequence SAPKVEVRHDTD. Disordered stretches follow at residues 482–518 and 525–544; these read SAPK…SDVA and DIPV…SADA. Residues 527–538 show a composition bias toward polar residues; that stretch reads PVSNSSTQSPGS.

Belongs to the aconitase/IPM isomerase family. As to quaternary structure, monomer. [4Fe-4S] cluster serves as cofactor.

It catalyses the reaction (2R,3S)-3-isopropylmalate = (2S)-2-isopropylmalate. It functions in the pathway amino-acid biosynthesis; L-leucine biosynthesis; L-leucine from 3-methyl-2-oxobutanoate: step 2/4. Its function is as follows. Catalyzes the isomerization between 2-isopropylmalate and 3-isopropylmalate, via the formation of 2-isopropylmaleate. This Eremothecium gossypii (strain ATCC 10895 / CBS 109.51 / FGSC 9923 / NRRL Y-1056) (Yeast) protein is 3-isopropylmalate dehydratase (LEU1).